We begin with the raw amino-acid sequence, 322 residues long: Protein mono-ADP-ribosyltransferase PARP16 (322 aa).

The Cytoplasmic portion of the chain corresponds to 1-287 (MQLSNRAAAR…RASSQLSWLS (287 aa)). A PARP alpha-helical domain is found at 5–91 (NRAAAREAAS…AWDLVSWILS (87 aa)). In terms of domain architecture, PARP catalytic spans 94–279 (ILTIHSAKKA…VYSQKQPKRA (186 aa)). The NAD(+) site is built by H152, Y182, and Y254. Residues 288 to 308 (SHWFVIMMSLYLLLLLIVSVT) form a helical membrane-spanning segment. At 309-322 (NSSVFHHFWNRVKR) the chain is on the lumenal side.

This sequence belongs to the ARTD/PARP family. As to quaternary structure, interacts with KPNB1. Auto-mono-ADP-ribosylated.

It localises to the endoplasmic reticulum membrane. The catalysed reaction is L-aspartyl-[protein] + NAD(+) = 4-O-(ADP-D-ribosyl)-L-aspartyl-[protein] + nicotinamide. The enzyme catalyses L-lysyl-[protein] + NAD(+) = N(6)-(ADP-D-ribosyl)-L-lysyl-[protein] + nicotinamide + H(+). It catalyses the reaction L-glutamyl-[protein] + NAD(+) = 5-O-(ADP-D-ribosyl)-L-glutamyl-[protein] + nicotinamide. Its activity is regulated as follows. In absence of activation signal, PARP16 is autoinhibited by the PARP alpha-helical domain (also named HD region), which prevents effective NAD(+)-binding. Activity is highly stimulated by signals, which unfold the PARP alpha-helical domain, relieving autoinhibition. In terms of biological role, intracellular mono-ADP-ribosyltransferase that plays a role in different processes, such as protein translation and unfolded protein response (UPR), through the mono-ADP-ribosylation of proteins involved in those processes. Acts as an inhibitor of protein translation by catalyzing mono-ADP-ribosylation of ribosomal subunits, such as RPL14 and RPS6, thereby inhibiting polysome assembly and mRNA loading. Mono-ADP-ribosylation of ribosomal subunits is promoted by NMNAT2. Involved in the unfolded protein response (UPR) by ADP-ribosylating and activating EIF2AK3 and ERN1, two important UPR effectors. May also mediate mono-ADP-ribosylation of karyopherin KPNB1 a nuclear import factor. May not modify proteins on arginine or cysteine residues compared to other mono-ADP-ribosyltransferases. This Mus musculus (Mouse) protein is Protein mono-ADP-ribosyltransferase PARP16.